Reading from the N-terminus, the 344-residue chain is L-rhamnose-proton symporter (344 aa).

Transmembrane regions (helical) follow at residues 4–24 (PILL…CFYA), 38–58 (WSLG…WWLL), 68–88 (FDMA…IGNI), 101–121 (MGIG…TPVL), 137–157 (TLLG…AGLL), 175–195 (LILA…MDAA), 207–227 (INAL…GAVV), 255–275 (LIAN…QFFF), 290–310 (ISWM…GLLF), and 324–344 (LVLG…GMAA).

The protein belongs to the L-rhamnose transporter (TC 2.A.7.6) family.

The protein resides in the cell inner membrane. It catalyses the reaction L-rhamnopyranose(in) + H(+)(in) = L-rhamnopyranose(out) + H(+)(out). Functionally, uptake of L-rhamnose across the cytoplasmic membrane with the concomitant transport of protons into the cell (symport system). This Pectobacterium carotovorum subsp. carotovorum (strain PC1) protein is L-rhamnose-proton symporter.